The primary structure comprises 197 residues: Adenylate kinase (197 aa).

ATP is bound at residue 12–17 (GSGKTT). Residues 34–63 (STGDMLREEVASGSELGKTIESYIAKGALV) form an NMP region. AMP-binding positions include T35, R40, 61–63 (ALV), 88–91 (GYPR), and Q95. Positions 130 to 144 (GRRAEAAPGEERSDD) are LID. An ATP-binding site is contributed by R131. Positions 141 and 152 each coordinate AMP. An ATP-binding site is contributed by R180.

It belongs to the adenylate kinase family. Monomer.

It localises to the cytoplasm. It catalyses the reaction AMP + ATP = 2 ADP. Its pathway is purine metabolism; AMP biosynthesis via salvage pathway; AMP from ADP: step 1/1. In terms of biological role, catalyzes the reversible transfer of the terminal phosphate group between ATP and AMP. Plays an important role in cellular energy homeostasis and in adenine nucleotide metabolism. The protein is Adenylate kinase of Sulfurovum sp. (strain NBC37-1).